Consider the following 872-residue polypeptide: Alanine--tRNA ligase (872 aa).

The Zn(2+) site is built by His567, His571, Cys669, and His673.

This sequence belongs to the class-II aminoacyl-tRNA synthetase family. Zn(2+) serves as cofactor.

Its subcellular location is the cytoplasm. It carries out the reaction tRNA(Ala) + L-alanine + ATP = L-alanyl-tRNA(Ala) + AMP + diphosphate. In terms of biological role, catalyzes the attachment of alanine to tRNA(Ala) in a two-step reaction: alanine is first activated by ATP to form Ala-AMP and then transferred to the acceptor end of tRNA(Ala). Also edits incorrectly charged Ser-tRNA(Ala) and Gly-tRNA(Ala) via its editing domain. The protein is Alanine--tRNA ligase of Streptococcus agalactiae serotype V (strain ATCC BAA-611 / 2603 V/R).